Reading from the N-terminus, the 133-residue chain is Ribosome-binding factor A (133 aa).

Belongs to the RbfA family. In terms of assembly, monomer. Binds 30S ribosomal subunits, but not 50S ribosomal subunits or 70S ribosomes.

Its subcellular location is the cytoplasm. Functionally, one of several proteins that assist in the late maturation steps of the functional core of the 30S ribosomal subunit. Associates with free 30S ribosomal subunits (but not with 30S subunits that are part of 70S ribosomes or polysomes). Required for efficient processing of 16S rRNA. May interact with the 5'-terminal helix region of 16S rRNA. In Chlamydia muridarum (strain MoPn / Nigg), this protein is Ribosome-binding factor A.